Reading from the N-terminus, the 198-residue chain is Shikimate kinase (198 aa).

26-31 (GSGKSQ) contributes to the ATP binding site. Serine 30 lines the Mg(2+) pocket. The substrate site is built by aspartate 48, arginine 72, and glycine 94. Position 132 (arginine 132) interacts with ATP. A substrate-binding site is contributed by arginine 151. Glutamine 167 lines the ATP pocket.

This sequence belongs to the shikimate kinase family. In terms of assembly, monomer. Mg(2+) is required as a cofactor.

The protein localises to the cytoplasm. The enzyme catalyses shikimate + ATP = 3-phosphoshikimate + ADP + H(+). It functions in the pathway metabolic intermediate biosynthesis; chorismate biosynthesis; chorismate from D-erythrose 4-phosphate and phosphoenolpyruvate: step 5/7. Catalyzes the specific phosphorylation of the 3-hydroxyl group of shikimic acid using ATP as a cosubstrate. The protein is Shikimate kinase of Prochlorococcus marinus (strain NATL2A).